The sequence spans 952 residues: UvrABC system protein A (952 aa).

31 to 38 (GVSGSGKS) serves as a coordination point for ATP. The C4-type zinc finger occupies 253–280 (CPEHGSVLEELEPRIFSFNSPYGACPAC). ABC transporter domains follow at residues 309-591 (WSRG…PQSL) and 611-938 (GNGK…AFLA). 643–650 (GPSGSGKS) is an ATP binding site. The segment at 742-768 (CEACGGDGTVKIEMLFLPDLYVPCEVC) adopts a C4-type zinc-finger fold.

This sequence belongs to the ABC transporter superfamily. UvrA family. Forms a heterotetramer with UvrB during the search for lesions.

It localises to the cytoplasm. Its function is as follows. The UvrABC repair system catalyzes the recognition and processing of DNA lesions. UvrA is an ATPase and a DNA-binding protein. A damage recognition complex composed of 2 UvrA and 2 UvrB subunits scans DNA for abnormalities. When the presence of a lesion has been verified by UvrB, the UvrA molecules dissociate. This chain is UvrABC system protein A, found in Thermus thermophilus (strain ATCC 27634 / DSM 579 / HB8).